The following is a 218-amino-acid chain: Guanylate kinase (218 aa).

A Guanylate kinase-like domain is found at 15 to 194; sequence GMMLVLSSPS…SIADVRAILR (180 aa). 22 to 29 provides a ligand contact to ATP; the sequence is SPSGAGKT.

The protein belongs to the guanylate kinase family.

It localises to the cytoplasm. The enzyme catalyses GMP + ATP = GDP + ADP. Essential for recycling GMP and indirectly, cGMP. This Rhodospirillum rubrum (strain ATCC 11170 / ATH 1.1.1 / DSM 467 / LMG 4362 / NCIMB 8255 / S1) protein is Guanylate kinase.